Consider the following 1006-residue polypeptide: Unconventional myosin-Id (1006 aa).

An N-acetylalanine modification is found at Ala-2. In terms of domain architecture, Myosin motor spans 9–695; the sequence is FGKADFVLMD…TLFTLEELRA (687 aa). 102-109 contacts ATP; sequence GESGAGKT. Ser-200 carries the post-translational modification Phosphoserine. A Phosphotyrosine modification is found at Tyr-536. Positions 572–594 are actin-binding; the sequence is MIALVDNLASKEPYYVRCIKPND. IQ domains are found at residues 699 to 719 and 721 to 741; these read IRIV…MRYK and TKAA…SYIH. In terms of domain architecture, TH1 spans 812–1005; sequence GQRADLGLQR…RSGFILSVPG (194 aa).

Belongs to the TRAFAC class myosin-kinesin ATPase superfamily. Myosin family. Interacts (via the two IQ motifs) with calmodulin. Binds an additional calmodulin chain via a third, C-terminal region. Interacts with F-actin. In terms of tissue distribution, expressed in many tissues. Highest levels in brain, followed by lung and ovary; expression is lowest in spleen.

It is found in the cytoplasm. It localises to the perikaryon. The protein resides in the cell projection. Its subcellular location is the dendrite. The protein localises to the early endosome. It is found in the cell cortex. In terms of biological role, unconventional myosin that functions as actin-based motor protein with ATPase activity. Plays a role in endosomal protein trafficking, and especially in the transfer of cargo proteins from early to recycling endosomes. Required for normal planar cell polarity in ciliated tracheal cells, for normal rotational polarity of cilia, and for coordinated, unidirectional ciliary movement in the trachea. Required for normal, polarized cilia organization in brain ependymal epithelial cells. The chain is Unconventional myosin-Id (MYO1D) from Homo sapiens (Human).